Here is a 402-residue protein sequence, read N- to C-terminus: Meiosis-specific cyclin rem1 (402 aa).

The protein belongs to the cyclin family. Cyclin AB subfamily.

In terms of biological role, required for pre-meiotic DNA synthesis and S phase progression. Regulates levels of meiotic intragenic recombination. This Schizosaccharomyces pombe (strain 972 / ATCC 24843) (Fission yeast) protein is Meiosis-specific cyclin rem1 (rem1).